The following is a 284-amino-acid chain: Heat stress transcription factor B-1 (284 aa).

A DNA-binding region spans residues 12 to 106 (PAPFLSKTYQ…LLTDIRRRKS (95 aa)). Residues 118–151 (VGSPSESNSGGGDDHGSSSTSSPGSSKNPGSVEN) form a disordered region. Low complexity predominate over residues 134–148 (SSSTSSPGSSKNPGS). The tract at residues 147–192 (GSVENMVADLSGENEKLKRENNNLSSELAAAKKQRDELVTFLTGHL) is hydrophobic repeat HR-A/B. A Nuclear localization signal motif is present at residues 247 to 252 (RKKRDR).

The protein belongs to the HSF family. Class B subfamily. In terms of assembly, homotrimer. Post-translationally, exhibits temperature-dependent phosphorylation.

Its subcellular location is the nucleus. Functionally, transcriptional regulator that specifically binds DNA sequence 5'-AGAAnnTTCT-3' known as heat shock promoter elements (HSE). This Arabidopsis thaliana (Mouse-ear cress) protein is Heat stress transcription factor B-1 (HSFB1).